The primary structure comprises 307 residues: MFRQRSIQNLVRTIGVGVHSGRRVELTLRPAEANTGIVFHRVDLPQVVDLPASAIGVGDTRMASVLQQGNVRVSTVEHLMSALAGLGIDNLHVDLTAEEVPIMDGSAATFVYLLRSAGIVEQNAPKRFIRVLKPIEVREGEGRNEKWARLEPHEGFALAFSIDFRHPAIDSTANFAEIDFATHSYVREIARARTFGFVNEVEALRSMGLARGGSLDNAIVMDEFRVLNSDGLRYDDEFVKHKILDAIGDLYLLGKPLVARYVAYKSGHALNNQLARALLEQQDAWELVTYESQAEAPQAFRHEWKLA.

The Zn(2+) site is built by His-78, His-241, and Asp-245. The active-site Proton donor is the His-268.

It belongs to the LpxC family. It depends on Zn(2+) as a cofactor.

It carries out the reaction a UDP-3-O-[(3R)-3-hydroxyacyl]-N-acetyl-alpha-D-glucosamine + H2O = a UDP-3-O-[(3R)-3-hydroxyacyl]-alpha-D-glucosamine + acetate. It functions in the pathway glycolipid biosynthesis; lipid IV(A) biosynthesis; lipid IV(A) from (3R)-3-hydroxytetradecanoyl-[acyl-carrier-protein] and UDP-N-acetyl-alpha-D-glucosamine: step 2/6. Catalyzes the hydrolysis of UDP-3-O-myristoyl-N-acetylglucosamine to form UDP-3-O-myristoylglucosamine and acetate, the committed step in lipid A biosynthesis. The protein is UDP-3-O-acyl-N-acetylglucosamine deacetylase of Bordetella bronchiseptica (strain ATCC BAA-588 / NCTC 13252 / RB50) (Alcaligenes bronchisepticus).